The chain runs to 155 residues: 6,7-dimethyl-8-ribityllumazine synthase (155 aa).

5-amino-6-(D-ribitylamino)uracil contacts are provided by residues Phe-24, 58 to 60 (AFE), and 82 to 84 (VII). 87-88 (ST) contacts (2S)-2-hydroxy-3-oxobutyl phosphate. His-90 acts as the Proton donor in catalysis. Residue Phe-115 coordinates 5-amino-6-(D-ribitylamino)uracil. Arg-129 is a (2S)-2-hydroxy-3-oxobutyl phosphate binding site.

It belongs to the DMRL synthase family.

The catalysed reaction is (2S)-2-hydroxy-3-oxobutyl phosphate + 5-amino-6-(D-ribitylamino)uracil = 6,7-dimethyl-8-(1-D-ribityl)lumazine + phosphate + 2 H2O + H(+). It functions in the pathway cofactor biosynthesis; riboflavin biosynthesis; riboflavin from 2-hydroxy-3-oxobutyl phosphate and 5-amino-6-(D-ribitylamino)uracil: step 1/2. In terms of biological role, catalyzes the formation of 6,7-dimethyl-8-ribityllumazine by condensation of 5-amino-6-(D-ribitylamino)uracil with 3,4-dihydroxy-2-butanone 4-phosphate. This is the penultimate step in the biosynthesis of riboflavin. This Chlorobaculum tepidum (strain ATCC 49652 / DSM 12025 / NBRC 103806 / TLS) (Chlorobium tepidum) protein is 6,7-dimethyl-8-ribityllumazine synthase.